We begin with the raw amino-acid sequence, 2291 residues long: Spectrin beta chain (2291 aa).

Residues 1–271 (MTTDISIVRW…IITYVVTYYH (271 aa)) are actin-binding. Calponin-homology (CH) domains are found at residues 50–154 (SVQK…LRFQ) and 169–274 (KSAK…HYFS). Spectrin repeat units follow at residues 300–408 (VHDY…ALRE), 420–521 (AARF…MRLE), 525–633 (QLQQ…RLEE), 636–739 (KLWQ…RLEN), 743–843 (YFQL…QRLL), 848–948 (LYKL…MDDL), 954–1057 (VQTF…KLEE), 1060–1166 (DLHR…VLLS), 1170–1272 (DQQL…EKLK), 1276–1376 (KLHE…GAML), 1386–1484 (QQTC…KALE), 1488–1591 (EAFQ…HLLE), 1594–1697 (KVQQ…RLNE), 1701–1802 (LFML…TQML), 1807–1909 (ELHK…QKLA), 1913–2015 (DLFR…ENLQ), and 2020–2089 (VYQF…KEMK). Residues 2097–2140 (EAERQRIKEEQEAKAASEAAEQAKREAERRDDVDVGASHDDSER) show a composition bias toward basic and acidic residues. Residues 2097–2152 (EAERQRIKEEQEAKAASEAAEQAKREAERRDDVDVGASHDDSERGGTPGAGEGHEG) are disordered. Residues 2147-2259 (GEGHEGYVTR…WVTSLKAQSD (113 aa)) enclose the PH domain. S2195 bears the Phosphoserine mark. A compositionally biased stretch (polar residues) spans 2262-2275 (AVAASRSQTLPATS). A disordered region spans residues 2262–2291 (AVAASRSQTLPATSQKDEPKRRSFFTLKKK).

It belongs to the spectrin family. Native spectrin molecule is a tetramer composed of two antiparallel heterodimers joined head to head so that each end of the native molecule includes the C-terminus of the alpha subunit and the N-terminus of the beta subunit.

Its subcellular location is the cytoplasm. It localises to the cytoskeleton. The protein resides in the cell cortex. Spectrin is the major constituent of the cytoskeletal network underlying the erythrocyte plasma membrane. It associates with band 4.1 and actin to form the cytoskeletal superstructure of the erythrocyte plasma membrane. Interacts with calmodulin in a calcium-dependent manner. This Drosophila melanogaster (Fruit fly) protein is Spectrin beta chain (beta-Spec).